We begin with the raw amino-acid sequence, 73 residues long: Translation initiation factor IF-1 (73 aa).

Positions 1 to 73 constitute an S1-like domain; the sequence is MAKKEDTIVL…TKARVVYRHR (73 aa).

It belongs to the IF-1 family. Component of the 30S ribosomal translation pre-initiation complex which assembles on the 30S ribosome in the order IF-2 and IF-3, IF-1 and N-formylmethionyl-tRNA(fMet); mRNA recruitment can occur at any time during PIC assembly.

It is found in the cytoplasm. Its function is as follows. One of the essential components for the initiation of protein synthesis. Stabilizes the binding of IF-2 and IF-3 on the 30S subunit to which N-formylmethionyl-tRNA(fMet) subsequently binds. Helps modulate mRNA selection, yielding the 30S pre-initiation complex (PIC). Upon addition of the 50S ribosomal subunit IF-1, IF-2 and IF-3 are released leaving the mature 70S translation initiation complex. In Chlamydia abortus (strain DSM 27085 / S26/3) (Chlamydophila abortus), this protein is Translation initiation factor IF-1.